The sequence spans 294 residues: Arsenical-resistance protein ARR1 (294 aa).

Basic residues predominate over residues 1–11 (MAKPRGRKGGR). The disordered stretch occupies residues 1-29 (MAKPRGRKGGRKPSLTPPKNKRAAQLRAS). Residues 22–45 (RAAQLRASQNAFRKRKLERLEELE) are basic motif. The bZIP domain maps to 22–72 (RAAQLRASQNAFRKRKLERLEELEKKEAQLTVTNDQIHILKKENELLHFML). The tract at residues 44–72 (LEKKEAQLTVTNDQIHILKKENELLHFML) is leucine-zipper. Cysteine 132, cysteine 137, and cysteine 274 together coordinate arsenite.

The protein belongs to the bZIP family. YAP subfamily. As to quaternary structure, homodimer. Post-translationally, phosphorylation by HOG1 promotes nuclear localization in the presence of arsenic.

It localises to the cytoplasm. It is found in the nucleus. Transcriptional activity is controlled by regulated degradation by the ubiquitin-proteasome pathway in absence of arsenic. Arsenic-exposure results in stabilization and increased transcriptional activity. Functionally, transcription activator required for resistance to arsenic compounds and for a regulated expression of ACR2, ACR3 and YCF1. In Saccharomyces cerevisiae (strain ATCC 204508 / S288c) (Baker's yeast), this protein is Arsenical-resistance protein ARR1.